The primary structure comprises 367 residues: NADH-quinone oxidoreductase subunit D (367 aa).

It belongs to the complex I 49 kDa subunit family. In terms of assembly, NDH-1 is composed of 14 different subunits. Subunits NuoB, C, D, E, F, and G constitute the peripheral sector of the complex.

The protein resides in the cell membrane. It catalyses the reaction a quinone + NADH + 5 H(+)(in) = a quinol + NAD(+) + 4 H(+)(out). In terms of biological role, NDH-1 shuttles electrons from NADH, via FMN and iron-sulfur (Fe-S) centers, to quinones in the respiratory chain. The immediate electron acceptor for the enzyme in this species is believed to be ubiquinone. Couples the redox reaction to proton translocation (for every two electrons transferred, four hydrogen ions are translocated across the cytoplasmic membrane), and thus conserves the redox energy in a proton gradient. The sequence is that of NADH-quinone oxidoreductase subunit D from Dehalococcoides mccartyi (strain ATCC BAA-2266 / KCTC 15142 / 195) (Dehalococcoides ethenogenes (strain 195)).